Reading from the N-terminus, the 98-residue chain is NADH-ubiquinone oxidoreductase chain 4L (98 aa).

The next 3 helical transmembrane spans lie at 1–21 (MSSI…GLLM), 29–49 (SLLC…VTML), and 61–81 (VMLM…LVTV).

It belongs to the complex I subunit 4L family. As to quaternary structure, core subunit of respiratory chain NADH dehydrogenase (Complex I) which is composed of 45 different subunits.

It is found in the mitochondrion inner membrane. The catalysed reaction is a ubiquinone + NADH + 5 H(+)(in) = a ubiquinol + NAD(+) + 4 H(+)(out). Functionally, core subunit of the mitochondrial membrane respiratory chain NADH dehydrogenase (Complex I) which catalyzes electron transfer from NADH through the respiratory chain, using ubiquinone as an electron acceptor. Part of the enzyme membrane arm which is embedded in the lipid bilayer and involved in proton translocation. This chain is NADH-ubiquinone oxidoreductase chain 4L (MT-ND4L), found in Tamandua tetradactyla (Southern anteater).